The chain runs to 82 residues: Small ribosomal subunit protein bS16 (82 aa).

This sequence belongs to the bacterial ribosomal protein bS16 family.

In Pectobacterium carotovorum subsp. carotovorum (strain PC1), this protein is Small ribosomal subunit protein bS16.